The primary structure comprises 350 residues: ALA-interacting subunit 5 (350 aa).

The tract at residues 1 to 23 (MSSTAASSTVGGGGSSEISGVKK) is disordered. At S2 the chain carries N-acetylserine. The helical transmembrane segment at 50–70 (VILTFLVAGVVFIPLGVICLF) threads the bilayer. N-linked (GlcNAc...) asparagine glycosylation is found at N181 and N231. A helical transmembrane segment spans residues 304–324 (FLGIAYLTVGSICLFLAVTFA).

The protein belongs to the CDC50/LEM3 family. As to quaternary structure, interacts with ALA2 and ALA3 in a heterologous system. Expressed in roots, leaves, stems, flowers and siliques.

The protein resides in the golgi apparatus membrane. The protein localises to the prevacuolar compartment membrane. Its subcellular location is the endoplasmic reticulum membrane. Required for the lipid transport activity of the ALA/ALIS P4-ATPase complex. This Arabidopsis thaliana (Mouse-ear cress) protein is ALA-interacting subunit 5 (ALIS5).